A 105-amino-acid chain; its full sequence is MVKQIESKYAFQEALNSAGEKLVVVDFSATWCGPCKMIKPFFHSLSEKYSNVVFLEVDVDDCQDVAAECEVKCMPTFQFFKKGQKVGEFSGANKEKLEATINELI.

The Thioredoxin domain maps to 2 to 105 (VKQIESKYAF…KLEATINELI (104 aa)). Lysine 3 is subject to N6-acetyllysine. An N6-succinyllysine modification is found at lysine 8. Active-site nucleophile residues include cysteine 32 and cysteine 35. Cysteine 32 and cysteine 35 are joined by a disulfide. Lysine 39 carries the post-translational modification N6-acetyllysine. Residues cysteine 62 and cysteine 69 each carry the S-nitrosocysteine modification. At cysteine 73 the chain carries S-nitrosocysteine; alternate. The residue at position 94 (lysine 94) is an N6-acetyllysine; alternate. N6-succinyllysine; alternate is present on lysine 94.

Belongs to the thioredoxin family. As to quaternary structure, homodimer; disulfide-linked. Interacts with TXNIP through the redox-active site. Interacts with MAP3K5 and CASP3. Interacts with APEX1; the interaction stimulates the FOS/JUN AP-1 DNA-binding activity in a redox-dependent manner. In the fully reduced protein, both Cys-69 and Cys-73 are nitrosylated in response to nitric oxide (NO). When two disulfide bonds are present in the protein, only Cys-73 is nitrosylated. Cys-73 can serve as donor for nitrosylation of target proteins.

It is found in the nucleus. Its subcellular location is the cytoplasm. It localises to the secreted. Participates in various redox reactions through the reversible oxidation of its active center dithiol to a disulfide and catalyzes dithiol-disulfide exchange reactions. Plays a role in the reversible S-nitrosylation of cysteine residues in target proteins, and thereby contributes to the response to intracellular nitric oxide. Nitrosylates the active site Cys of CASP3 in response to nitric oxide (NO), and thereby inhibits caspase-3 activity. Induces the FOS/JUN AP-1 DNA binding activity in ionizing radiation (IR) cells through its oxidation/reduction status and stimulates AP-1 transcriptional activity. This is Thioredoxin (TXN) from Bos taurus (Bovine).